A 437-amino-acid polypeptide reads, in one-letter code: Zinc finger CCCH domain-containing protein 40 (437 aa).

A C3H1-type zinc finger spans residues 6 to 33 (MYKTKLCILFNKTGDCSRPNCTFAHGNA). The tract at residues 35-107 (LRRPGESSFT…MPFENRRDKD (73 aa)) is disordered. Residues 48–85 (HNMDSDLRDRRHNMDSDLRDRLGRQFSPERRPSLDRSG) show a composition bias toward basic and acidic residues. Positions 145-244 (NNVLEEQLKD…LGNQLSTYLA (100 aa)) form a coiled coil. At Ser-259 the chain carries Phosphoserine. Disordered stretches follow at residues 266–360 (RNLR…RRRF) and 380–437 (EFDD…DDSV). A compositionally biased stretch (basic and acidic residues) spans 307–319 (RGEEEKVENEKKR). 2 stretches are compositionally biased toward acidic residues: residues 333–343 (EEESGAWNDED) and 383–392 (DVAESEEENP). The segment covering 426–437 (MEQKKAYDDDSV) has biased composition (basic and acidic residues).

The chain is Zinc finger CCCH domain-containing protein 40 from Arabidopsis thaliana (Mouse-ear cress).